Reading from the N-terminus, the 382-residue chain is Lipid-A-disaccharide synthase (382 aa).

This sequence belongs to the LpxB family.

The enzyme catalyses 2-N,3-O-bis[(3R)-3-hydroxytetradecanoyl]-alpha-D-glucosaminyl 1-phosphate + UDP-2-N,3-O-bis[(3R)-3-hydroxytetradecanoyl]-alpha-D-glucosamine = lipid A disaccharide (E. coli) + UDP + H(+). It catalyses the reaction a lipid X + a UDP-2-N,3-O-bis[(3R)-3-hydroxyacyl]-alpha-D-glucosamine = a lipid A disaccharide + UDP + H(+). It functions in the pathway glycolipid biosynthesis; lipid IV(A) biosynthesis; lipid IV(A) from (3R)-3-hydroxytetradecanoyl-[acyl-carrier-protein] and UDP-N-acetyl-alpha-D-glucosamine: step 5/6. Condensation of UDP-2,3-diacylglucosamine and 2,3-diacylglucosamine-1-phosphate to form lipid A disaccharide, a precursor of lipid A, a phosphorylated glycolipid that anchors the lipopolysaccharide to the outer membrane of the cell. The protein is Lipid-A-disaccharide synthase of Salmonella agona (strain SL483).